Consider the following 318-residue polypeptide: Xanthocillin biosynthesis cluster transcription factor xanC (318 aa).

A compositionally biased stretch (basic and acidic residues) spans 1-27; the sequence is MHSQTTKDEQSKDDSSNEKQDAIERRR. A disordered region spans residues 1 to 39; it reads MHSQTTKDEQSKDDSSNEKQDAIERRRLQNRLSQRNHRR. The bZIP domain maps to 20–52; it reads QDAIERRRLQNRLSQRNHRRKIRDRIAKLQERV. Residues 25 to 40 are basic motif; the sequence is RRRLQNRLSQRNHRRK. The tract at residues 41–48 is leucine-zipper; that stretch reads IRDRIAKL. Disordered stretches follow at residues 71–107, 123–171, and 269–318; these read PPAA…QRNV, PSSS…FSLD, and GRHC…SMML. Composition is skewed to low complexity over residues 123–139 and 147–171; these read PSSS…PFDL and STNS…FSLD. Residues 293–318 are compositionally biased toward polar residues; it reads APSSTPFCPLHPSQSSSLDNYQSMML.

The protein belongs to the bZIP family.

It localises to the nucleus. Functionally, transcription regulator that specifically up-regulates the gene cluster that mediates the biosynthesis of the isocyanide xanthocillin and its derivatives. This chain is Xanthocillin biosynthesis cluster transcription factor xanC, found in Aspergillus fumigatus (strain ATCC MYA-4609 / CBS 101355 / FGSC A1100 / Af293) (Neosartorya fumigata).